Here is a 488-residue protein sequence, read N- to C-terminus: UDP-glycosyltransferase 73B1 (488 aa).

Residues threonine 297, 356–358 (APQ), 373–381 (HCGWNSLLE), and 395–398 (GAEQ) each bind UDP-alpha-D-glucose.

It belongs to the UDP-glycosyltransferase family.

Its function is as follows. Possesses low quercetin 3-O-glucosyltransferase and 7-O-glucosyltransferase activities in vitro. In Arabidopsis thaliana (Mouse-ear cress), this protein is UDP-glycosyltransferase 73B1 (UGT73B1).